Consider the following 439-residue polypeptide: C4-dicarboxylate transport protein (439 aa).

A run of 9 helical transmembrane segments spans residues 9–29 (HLYFQVLTAISIGVAVGYYMP), 45–65 (MIKMIITPIIFCTVVTGIAGM), 80–100 (LYFEAVSTLALAIGLMVINVI), 150–170 (GEILQVLFFAILFGLALSAMG), 186–206 (AFFGVVNIIMKFAPIGAFGAM), 221–241 (LGMLMGSFYLTCLLFIFVVLG), 291–311 (VVGLVIPTGYSFNLDGTSIYL), 334–354 (ILGVLMLTSKGAAGVTGSGFV), and 357–377 (AATFAAIPTIPVAGLALILGI).

The protein belongs to the dicarboxylate/amino acid:cation symporter (DAACS) (TC 2.A.23) family.

The protein resides in the cell inner membrane. Functionally, responsible for the transport of dicarboxylates such as succinate, fumarate, and malate from the periplasm across the membrane. This Citrifermentans bemidjiense (strain ATCC BAA-1014 / DSM 16622 / JCM 12645 / Bem) (Geobacter bemidjiensis) protein is C4-dicarboxylate transport protein.